Consider the following 139-residue polypeptide: Large ribosomal subunit protein uL16 (139 aa).

This sequence belongs to the universal ribosomal protein uL16 family. In terms of assembly, part of the 50S ribosomal subunit.

Binds 23S rRNA and is also seen to make contacts with the A and possibly P site tRNAs. The polypeptide is Large ribosomal subunit protein uL16 (Chlorobium chlorochromatii (strain CaD3)).